A 390-amino-acid polypeptide reads, in one-letter code: Altered inheritance of mitochondria protein 6 (390 aa).

Positions 1 to 17 are cleaved as a signal peptide; sequence MLGLKGCLTILIGYVIA.

It belongs to the AIM6 family.

The chain is Altered inheritance of mitochondria protein 6 from Saccharomyces cerevisiae (strain ATCC 204508 / S288c) (Baker's yeast).